Consider the following 1396-residue polypeptide: MPPPLLPKRSKLETEKAQSNKITPREEQQSEKIGKSNHAASSSSSSTQGAVKRRSVFEDVTNASHSQCVQSKEDNIELKSHVSKRTKKGVGEVTQKKIKSSKMGHVTSLSNMEKEFILDIPNKPKTLTTEEPSVFQKTLVLNEEPATKETCLMRKTLKSCAFHQETLLMEKPLTLLVETEDYNEFDTELMTSKKKDKPEDPTIIEEMTDLKKSVIRKVTLTSSPLWLKNKHVVQEEKPVIQEKSSFKRISLVSNVVTTKEKPPVKKPHFRKKKPTTEMKSLLQEPSLEEKYNTQEDASILKKPQVLQENTNNKDATLTEPVTFKGKHSANEATHTKKPSSSKNNPDPQGKGTNLRPLRVHPVTYENEPMSSKKSTTKKKDSHFHGPSVLPDKHSPQMEVSTVKKSLALPNPTTEEKMLHFPVATVLEKQHNMGEAPCLKKPSPLRKQQQLPKRRRFFSNSAVQETVIRKPLFFKMSTTEKDPPSQWPSALPKKHISPGELSKQKKQHVSPKHNMEEDSQCWLDSAFKKQLSREEPASTHTPLKLEMQQAITKETGFHLRNPLVLPTVTSEAKSLTKEPPSFREQNTSLLKRKSTTHTITLQQAQSEWQEMTDEDRNLFSIKPGSHRKEPIPEFLQNPLPPNENCLISQKLSHSMPFASQKTTSQERAHRKESVASNDDKNFFSQDLFSPFSSADEDTLKFHKSLDFQEQVDRKNDSHKKMFDSQDSVSEEESFLRKLFCKDRCSSTEELSQERTVALEQEFLLIKILNENTSSDVDEPLSHQSPHIQNHSDTTKEALEASEALEAPEALETLEALVASEDLEEPLNILEELSTENMVALMKMLVTEDESTKDSFSGNYTAAREAHAEKSLSLEETSINEAATLKESLSSQEKHRAELVTVLKELLVLMKNPSLKRVALAFQENPSNNVETLLREVLALVENSTADESTLQEKPSTKTDVTPKELLALEENSSNKKANPMDSLSFDHKPDTEMGEIARMVLTDEEYNIDTLYERVLALSQGLIAADQLSFTDLQNFEETKIVDEEEFFKSFLVFENKNSPNMSSNAFESRTDNSSAIMPSSKAFNPVENSNPYVSSSKSFKSTLGAKETEITIQDDSDSLERIEKEGQDPLLNTIYAKDVFNYLKEREEKFLVQKYMDGQMELTSDMRAILVDWLVEIQGSFQMTHETLYLAVKIMDLYLMKAQCKKNHLQLLGSTTYMIAAKFEESYPPSLSEFLFICEDMYEKSDMVSLESSILQTLNFDINIPTAYNFLRRYASCIHASMKTLTLSRFICEMTLQEYEYIEERPSKLAAASFILALYMRNLSNCVPTLEYFTGYKMAELHILVRKLNHLLNFRSHSILKNVFEKYSEETYFEVAKIPPLSKQDLENLLNCALFH.

Disordered stretches follow at residues 1–64 (MPPP…TNAS), 259–398 (KEKP…PQME), and 477–500 (TTEK…PGEL). The span at 10 to 34 (SKLETEKAQSNKITPREEQQSEKIG) shows a compositional bias: basic and acidic residues. Positions 54–62 (RSVFEDVTN) match the D-box motif. Over residues 264 to 273 (VKKPHFRKKK) the composition is skewed to basic residues. Polar residues predominate over residues 306–315 (LQENTNNKDA). Ser-703 carries the phosphoserine modification. A disordered region spans residues 775–796 (VDEPLSHQSPHIQNHSDTTKEA). Residues 780–790 (SHQSPHIQNHS) are compositionally biased toward polar residues.

This sequence belongs to the cyclin family. Cyclin AB subfamily. Interacts with CDK2 kinase. Post-translationally, ubiquitinated. Ubiquitination leads to its degradation during anaphase entry, after degradation of CCNB1. In terms of tissue distribution, expressed in testis. Also expressed in the fetal ovary, but not in the adult.

It is found in the nucleus. Functionally, cyclins are positive regulatory subunits of the cyclin-dependent kinases (CDKs), and thereby play an essential role in the control of the cell cycle, notably via their destruction during cell division. Its tissue specificity suggest that it may be required during early meiotic prophase I. The chain is G2/mitotic-specific cyclin-B3 (Ccnb3) from Mus musculus (Mouse).